A 268-amino-acid polypeptide reads, in one-letter code: Tryptophan synthase alpha chain (268 aa).

Active-site proton acceptor residues include Glu-49 and Asp-60.

This sequence belongs to the TrpA family. Tetramer of two alpha and two beta chains.

It carries out the reaction (1S,2R)-1-C-(indol-3-yl)glycerol 3-phosphate + L-serine = D-glyceraldehyde 3-phosphate + L-tryptophan + H2O. The protein operates within amino-acid biosynthesis; L-tryptophan biosynthesis; L-tryptophan from chorismate: step 5/5. Functionally, the alpha subunit is responsible for the aldol cleavage of indoleglycerol phosphate to indole and glyceraldehyde 3-phosphate. The sequence is that of Tryptophan synthase alpha chain from Xylella fastidiosa (strain M23).